The chain runs to 386 residues: GTPase Obg (386 aa).

The Obg domain occupies 4 to 162 (SNFVDYVKIY…RTVILQLKLL (159 aa)). The tract at residues 18–44 (KGGRGSSHFRREKYIPKGGPDGGDGGR) is disordered. The region spanning 163–329 (ADVGLVGFPN…LKDLLWKELN (167 aa)) is the OBG-type G domain. Residues 169–176 (GFPNAGKS), 194–198 (FTTLE), 216–219 (DIPG), 283–286 (TKSD), and 310–312 (SSI) each bind GTP. Residues Ser176 and Thr196 each contribute to the Mg(2+) site. The tract at residues 357–386 (YIFPVDEDEDDPDEEYEEYWDDDEDEDTRK) is disordered.

This sequence belongs to the TRAFAC class OBG-HflX-like GTPase superfamily. OBG GTPase family. In terms of assembly, monomer. Mg(2+) serves as cofactor.

Its subcellular location is the cytoplasm. Functionally, an essential GTPase which binds GTP, GDP and possibly (p)ppGpp with moderate affinity, with high nucleotide exchange rates and a fairly low GTP hydrolysis rate. Plays a role in control of the cell cycle, stress response, ribosome biogenesis and in those bacteria that undergo differentiation, in morphogenesis control. The sequence is that of GTPase Obg from Parabacteroides distasonis (strain ATCC 8503 / DSM 20701 / CIP 104284 / JCM 5825 / NCTC 11152).